The sequence spans 94 residues: Large ribosomal subunit protein bL28 (94 aa).

The protein belongs to the bacterial ribosomal protein bL28 family.

This chain is Large ribosomal subunit protein bL28, found in Maricaulis maris (strain MCS10) (Caulobacter maris).